The sequence spans 107 residues: U1-lycotoxin-Ls1v (107 aa).

Positions 1–20 (MMKVLVVVALLVTLISYSSS) are cleaved as a signal peptide. Positions 21–41 (EGIDDLEADELLSLTANEQTR) are excised as a propeptide. Intrachain disulfides connect Cys44-Cys59, Cys51-Cys68, Cys58-Cys86, and Cys70-Cys84.

This sequence belongs to the neurotoxin 19 (CSTX) family. 04 (U1-Lctx) subfamily. As to expression, expressed by the venom gland.

Its subcellular location is the secreted. The protein is U1-lycotoxin-Ls1v of Lycosa singoriensis (Wolf spider).